Reading from the N-terminus, the 912-residue chain is MFAPLLKKLFGSKNEREVKRMLKTVQLVNAFEEKMVALSDDQLRAKTAEFKDRIAKGETLDQLLPEAFAVAREAGKRVMGMRHFDVQLIGGMTLHEGKIAEMRTGEGKTLVGTLGVYLNALSGKGVHVVTVNDYLARRDANWMRPLYEFLGLSVGIVTPFQPPEEKRAAYAADITYGTNNEFGFDYLRDNMAFSMEEKFQRELNFAVIDEVDSILIDEARTPLIISGQAEDSSRLYIEINKLIPKLKLHVEEVEGEVTQEGHYTVDEKTRQVELNEAGHQFIEDQLTSIGLLAEGESLYSAHNLSLLTHVYAGLRAHKLFHRNVEYIVQDGQVVLVDEHTGRTMPGRRLSEGLHQAIEAKENLNIQAESQTLASTTFQNYFRLYDKLSGMTGTADTEAFEFHQIYGLQVVVIPTNKPLARKDYNDLVFLTAEEKYAAIVNDIKESMAAGRPVLVGTATIETSEHMSALLEKEGIEHKVLNAKFHEKEAEIIAQAGRPGALTIATNMAGRGTDILLGGNWEVEVASLENPTPEQIAQIKADWQKRHQQVLESGGLQVIASERHESRRIDNQLRGRAGRQGDAGSSRFYLSLEDSLMRIFASDRVKNFMKALGMQSGEAIEHRMVTNAIEKAQRKVEGRNFDIRKQLLEFDDVNNEQRKVIYHMRNTLLAADNIGETIADFRQDVLNATVSAHIPPQSLPEQWDVAGLEASIASDFGVKLPIQQWLDEDDHLYEETLREKLMNELIAAYNEKEDQAGAEALRSFEKQIVLRVLDDLWKDHLSTMDHLRHGIHLRGYAQKNPKQEYKRESFTLFSELLDSIKRDSIRVLSHVQVRREDPAEEEQRLRQEAEALAARMQFEHAEAPGLEAQPELVGEEVDVALAAAPVRNEQKLGRNELCYCGSGKKFKHCHGQIQ.

ATP contacts are provided by residues Gln-87, 105–109 (GEGKT), and Asp-512. The Zn(2+) site is built by Cys-896, Cys-898, Cys-907, and His-908.

Belongs to the SecA family. Monomer and homodimer. Part of the essential Sec protein translocation apparatus which comprises SecA, SecYEG and auxiliary proteins SecDF-YajC and YidC. Zn(2+) is required as a cofactor.

The protein resides in the cell inner membrane. The protein localises to the cytoplasm. It catalyses the reaction ATP + H2O + cellular proteinSide 1 = ADP + phosphate + cellular proteinSide 2.. In terms of biological role, part of the Sec protein translocase complex. Interacts with the SecYEG preprotein conducting channel. Has a central role in coupling the hydrolysis of ATP to the transfer of proteins into and across the cell membrane, serving both as a receptor for the preprotein-SecB complex and as an ATP-driven molecular motor driving the stepwise translocation of polypeptide chains across the membrane. This is Protein translocase subunit SecA from Pseudomonas fluorescens (strain Pf0-1).